The primary structure comprises 200 residues: Ribonuclease HII (200 aa).

The 191-residue stretch at 10-200 (LIEAGCDEAG…LGDGQLNLNF (191 aa)) folds into the RNase H type-2 domain. A divalent metal cation-binding residues include Asp16, Glu17, and Asp108.

This sequence belongs to the RNase HII family. Requires Mn(2+) as cofactor. Mg(2+) serves as cofactor.

It is found in the cytoplasm. The enzyme catalyses Endonucleolytic cleavage to 5'-phosphomonoester.. Its function is as follows. Endonuclease that specifically degrades the RNA of RNA-DNA hybrids. This chain is Ribonuclease HII, found in Bacteroides thetaiotaomicron (strain ATCC 29148 / DSM 2079 / JCM 5827 / CCUG 10774 / NCTC 10582 / VPI-5482 / E50).